We begin with the raw amino-acid sequence, 548 residues long: Chaperonin GroEL (548 aa).

Residues 30–33, K51, 87–91, G415, 479–481, and D495 each bind ATP; these read TLGP, DGTTT, and NAA.

This sequence belongs to the chaperonin (HSP60) family. Forms a cylinder of 14 subunits composed of two heptameric rings stacked back-to-back. Interacts with the co-chaperonin GroES.

Its subcellular location is the cytoplasm. The catalysed reaction is ATP + H2O + a folded polypeptide = ADP + phosphate + an unfolded polypeptide.. In terms of biological role, together with its co-chaperonin GroES, plays an essential role in assisting protein folding. The GroEL-GroES system forms a nano-cage that allows encapsulation of the non-native substrate proteins and provides a physical environment optimized to promote and accelerate protein folding. This Nitratidesulfovibrio vulgaris (strain DSM 19637 / Miyazaki F) (Desulfovibrio vulgaris) protein is Chaperonin GroEL.